A 135-amino-acid polypeptide reads, in one-letter code: MRILVIITCIVAVATATKTCEANEELVSCHNTCEPQCGYTPKACTEQCIMNTCDCKDGFVRNSLGKCVEVSECTKETTKCPENETFFGCGTACEATCEKPNPTVCTKQCIVNVCQCSKGFVRHGLRCIDKKDCPK.

Residues 1–16 form the signal peptide; it reads MRILVIITCIVAVATA. 10 disulfide bridges follow: cysteine 20-cysteine 53, cysteine 29-cysteine 48, cysteine 33-cysteine 44, cysteine 37-cysteine 73, cysteine 55-cysteine 67, cysteine 80-cysteine 114, cysteine 89-cysteine 109, cysteine 93-cysteine 105, cysteine 97-cysteine 133, and cysteine 116-cysteine 127. 2 TIL domains span residues 20-73 and 80-133; these read CEAN…VSEC and CPEN…KKDC. Residue asparagine 83 is glycosylated (N-linked (GlcNAc...) asparagine).

As to expression, in male, expressed in the vas deferens cuboidal cells and, in posterior body wall and male-specific diagonal muscles. In hermaphrodites, expressed in posterior body wall muscles and spermatheca.

Its subcellular location is the secreted. It is found in the cytoplasmic vesicle. The protein resides in the secretory vesicle lumen. In terms of biological role, serine protease inhibitor. Probably by inhibiting serine protease tyr-5 in males, prevents the maturation of spermatids into mature motile spermatozoa until their transfer into a hermaphrodite. Also required for efficient sperm transfer and thus for male fertility. This chain is Serine protease inhibitor swm-1, found in Caenorhabditis elegans.